Reading from the N-terminus, the 150-residue chain is UPF0735 ACT domain-containing protein Csac_0995 (150 aa).

The ACT domain occupies 72–147 (TLALVLQDVP…GVKKIEILGR (76 aa)).

Belongs to the UPF0735 family.

This is UPF0735 ACT domain-containing protein Csac_0995 from Caldicellulosiruptor saccharolyticus (strain ATCC 43494 / DSM 8903 / Tp8T 6331).